The chain runs to 134 residues: Small ribosomal subunit protein bS6 (134 aa).

The span at 113-122 (NKDIKEKEQP) shows a compositional bias: basic and acidic residues. The disordered stretch occupies residues 113-134 (NKDIKEKEQPSESNVDADLKVN).

This sequence belongs to the bacterial ribosomal protein bS6 family.

Its function is as follows. Binds together with bS18 to 16S ribosomal RNA. This Borrelia recurrentis (strain A1) protein is Small ribosomal subunit protein bS6.